A 47-amino-acid chain; its full sequence is Ribosome-inactivating protein luffin P1 (47 aa).

Disulfide bonds link Cys-12/Cys-33 and Cys-16/Cys-29.

In terms of assembly, homotetramer.

The enzyme catalyses Endohydrolysis of the N-glycosidic bond at one specific adenosine on the 28S rRNA.. Functionally, inhibits protein synthesis in animal cells. This is Ribosome-inactivating protein luffin P1 from Luffa aegyptiaca (Sponge gourd).